Reading from the N-terminus, the 299-residue chain is 4-diphosphocytidyl-2-C-methyl-D-erythritol kinase (299 aa).

Lysine 19 is a catalytic residue. An ATP-binding site is contributed by 110-120; it reads PVASGIGGGSA. Aspartate 152 is a catalytic residue.

This sequence belongs to the GHMP kinase family. IspE subfamily.

It catalyses the reaction 4-CDP-2-C-methyl-D-erythritol + ATP = 4-CDP-2-C-methyl-D-erythritol 2-phosphate + ADP + H(+). It participates in isoprenoid biosynthesis; isopentenyl diphosphate biosynthesis via DXP pathway; isopentenyl diphosphate from 1-deoxy-D-xylulose 5-phosphate: step 3/6. In terms of biological role, catalyzes the phosphorylation of the position 2 hydroxy group of 4-diphosphocytidyl-2C-methyl-D-erythritol. This Agrobacterium fabrum (strain C58 / ATCC 33970) (Agrobacterium tumefaciens (strain C58)) protein is 4-diphosphocytidyl-2-C-methyl-D-erythritol kinase.